The sequence spans 376 residues: F-box/kelch-repeat protein At1g67480 (376 aa).

The F-box domain maps to 37–85; it reads DPLIPGLPDDVAKQCLALVPRARFPSMGSVCKKWRFVVQSKEFITVRRL. 4 Kelch repeats span residues 139 to 189, 190 to 237, 239 to 289, and 291 to 335; these read KLLV…EVNG, HVYV…AFNG, LYVM…LFCI, and WKNH…LLFS.

The sequence is that of F-box/kelch-repeat protein At1g67480 from Arabidopsis thaliana (Mouse-ear cress).